The primary structure comprises 297 residues: N-acetylmannosamine kinase (297 aa).

ATP contacts are provided by residues 5 to 12 and 132 to 139; these read ALDIGGTK and GVGGGIIL. Residues His156, Cys166, Cys168, and Cys173 each contribute to the Zn(2+) site.

Belongs to the ROK (NagC/XylR) family. NanK subfamily. As to quaternary structure, homodimer.

The catalysed reaction is an N-acyl-D-mannosamine + ATP = an N-acyl-D-mannosamine 6-phosphate + ADP + H(+). Its pathway is amino-sugar metabolism; N-acetylneuraminate degradation; D-fructose 6-phosphate from N-acetylneuraminate: step 2/5. Its function is as follows. Catalyzes the phosphorylation of N-acetylmannosamine (ManNAc) to ManNAc-6-P. This is N-acetylmannosamine kinase from Pasteurella multocida (strain Pm70).